The following is a 481-amino-acid chain: Delta 4,5-hexuronate-2-O-sulfatase (481 aa).

3-oxoalanine (Ser) is present on Ser-64. Residues Cys-225, Cys-226, His-462, and His-469 each contribute to the Zn(2+) site. The disordered stretch occupies residues 453–481 (VDADPRCRNHTPGYPSHEGPGAREILKRK). Basic and acidic residues predominate over residues 472–481 (PGAREILKRK).

The protein belongs to the sulfatase family. The cofactor is Zn(2+). In terms of processing, the conversion to 3-oxoalanine (also known as C-formylglycine, FGly), of a serine or cysteine residue in prokaryotes and of a cysteine residue in eukaryotes, is critical for catalytic activity.

Exosulfatase involved in the degradation of the glycosaminoglycans (GAGs) chondroitin sulfate (CS), dermatan sulfate (DS) and heparan sulfate (HS). 2-O-sulfatase active on unsaturated non-reducing end hexuronate units. Has a slight preference for HS-derived structures. GAG-specific sulfatases play a key role in the persistence of the major human gut symbiont B.thetaiotaomicron in the host gastrointestinal tract. This chain is Delta 4,5-hexuronate-2-O-sulfatase, found in Bacteroides thetaiotaomicron (strain ATCC 29148 / DSM 2079 / JCM 5827 / CCUG 10774 / NCTC 10582 / VPI-5482 / E50).